Reading from the N-terminus, the 58-residue chain is Large ribosomal subunit protein bL32 (58 aa).

The segment covering methionine 1 to asparagine 19 has biased composition (basic residues). The tract at residues methionine 1–aspartate 58 is disordered. The segment covering tryptophan 20–leucine 32 has biased composition (low complexity).

Belongs to the bacterial ribosomal protein bL32 family.

The polypeptide is Large ribosomal subunit protein bL32 (Trichodesmium erythraeum (strain IMS101)).